The sequence spans 510 residues: NAD(P)H-quinone oxidoreductase subunit 2 B, chloroplastic (510 aa).

13 consecutive transmembrane segments (helical) span residues 24–44 (LLLF…GLIL), 57–77 (IPWL…ALLF), 99–119 (IFQF…VEYI), 124–144 (MAIT…MFLC), 149–169 (LITI…LSGY), 183–203 (YLLM…WLYG), 227–247 (PGIS…LSPA), 295–315 (WHLH…LIAI), 323–343 (MLAY…IVGD), 347–367 (GYAS…GTFA), 395–415 (ALSL…AGFF), 418–438 (LHLF…IGLL), and 484–504 (MIVC…IIAI).

This sequence belongs to the complex I subunit 2 family. As to quaternary structure, NDH is composed of at least 16 different subunits, 5 of which are encoded in the nucleus.

Its subcellular location is the plastid. The protein localises to the chloroplast thylakoid membrane. It catalyses the reaction a plastoquinone + NADH + (n+1) H(+)(in) = a plastoquinol + NAD(+) + n H(+)(out). The catalysed reaction is a plastoquinone + NADPH + (n+1) H(+)(in) = a plastoquinol + NADP(+) + n H(+)(out). NDH shuttles electrons from NAD(P)H:plastoquinone, via FMN and iron-sulfur (Fe-S) centers, to quinones in the photosynthetic chain and possibly in a chloroplast respiratory chain. The immediate electron acceptor for the enzyme in this species is believed to be plastoquinone. Couples the redox reaction to proton translocation, and thus conserves the redox energy in a proton gradient. The sequence is that of NAD(P)H-quinone oxidoreductase subunit 2 B, chloroplastic from Buxus microphylla (Littleleaf boxwood).